The following is a 395-amino-acid chain: Zinc-regulated GTPase metalloprotein activator 1F (395 aa).

The tract at residues M1–L22 is disordered. The segment covering V8–P20 has biased composition (acidic residues). Positions E17–P24 match the psi-PxLVp motif motif. G49–T56 contributes to the GTP binding site. Positions 107, 109, and 110 each coordinate Zn(2+). The short motif at C107–C110 is the CXCC motif element. Residues C110–D114 and N203–D206 contribute to the GTP site. One can recognise a CobW C-terminal domain in the interval I274–V377.

This sequence belongs to the SIMIBI class G3E GTPase family. ZNG1 subfamily.

Its subcellular location is the nucleus. It carries out the reaction GTP + H2O = GDP + phosphate + H(+). In terms of biological role, zinc chaperone that directly transfers zinc cofactor to target metalloproteins, thereby activating them. Catalyzes zinc insertion into the active site of methionine aminopeptidase METAP1, which function to cleave the initiator methionine from polypeptides during or after protein translation. Mechanistically, the N-terminal psi-PxLVp motif binds to the C6H2-type zinc finger of inactive form of METAP1. After formation of the docked complex, zinc is transferred from the CXCC motif in the GTPase domain of ZNG1F to the zinc binding site in the peptidase domain of METAP1 in a process requiring GTP hydrolysis. GTP/GDP exchange is required for release of active METAP1. This Homo sapiens (Human) protein is Zinc-regulated GTPase metalloprotein activator 1F.